Here is a 306-residue protein sequence, read N- to C-terminus: tRNA dimethylallyltransferase (306 aa).

ATP is bound at residue 9–16 (GPTAIGKT). Substrate is bound at residue 11–16 (TAIGKT). The tract at residues 34-37 (DSMQ) is interaction with substrate tRNA.

Belongs to the IPP transferase family. In terms of assembly, monomer. It depends on Mg(2+) as a cofactor.

It catalyses the reaction adenosine(37) in tRNA + dimethylallyl diphosphate = N(6)-dimethylallyladenosine(37) in tRNA + diphosphate. Functionally, catalyzes the transfer of a dimethylallyl group onto the adenine at position 37 in tRNAs that read codons beginning with uridine, leading to the formation of N6-(dimethylallyl)adenosine (i(6)A). In Lactobacillus helveticus (strain DPC 4571), this protein is tRNA dimethylallyltransferase.